We begin with the raw amino-acid sequence, 29 residues long: U20-ctenitoxin-Co1a (29 aa).

2 cysteine pairs are disulfide-bonded: cysteine 3/cysteine 16 and cysteine 10/cysteine 21.

As to expression, expressed by the venom gland.

The protein resides in the secreted. The chain is U20-ctenitoxin-Co1a from Ctenus ornatus (Brazilian spider).